The primary structure comprises 384 residues: S-adenosylmethionine synthase (384 aa).

Histidine 15 contributes to the ATP binding site. Residue aspartate 17 participates in Mg(2+) binding. K(+) is bound at residue glutamate 43. L-methionine is bound by residues glutamate 56 and glutamine 99. A flexible loop region spans residues 99–109 (QSPDINQGVDR). ATP contacts are provided by residues 164 to 166 (DAK), 230 to 231 (RF), aspartate 239, 245 to 246 (RK), alanine 262, and lysine 266. Aspartate 239 is a binding site for L-methionine. Residue lysine 270 participates in L-methionine binding.

It belongs to the AdoMet synthase family. As to quaternary structure, homotetramer; dimer of dimers. Mg(2+) serves as cofactor. It depends on K(+) as a cofactor.

Its subcellular location is the cytoplasm. It catalyses the reaction L-methionine + ATP + H2O = S-adenosyl-L-methionine + phosphate + diphosphate. It functions in the pathway amino-acid biosynthesis; S-adenosyl-L-methionine biosynthesis; S-adenosyl-L-methionine from L-methionine: step 1/1. Functionally, catalyzes the formation of S-adenosylmethionine (AdoMet) from methionine and ATP. The overall synthetic reaction is composed of two sequential steps, AdoMet formation and the subsequent tripolyphosphate hydrolysis which occurs prior to release of AdoMet from the enzyme. This Photobacterium profundum (strain SS9) protein is S-adenosylmethionine synthase.